Here is a 218-residue protein sequence, read N- to C-terminus: Octanoyltransferase (218 aa).

Positions 31 to 206 (REAADEVWLV…QLVKHLDYAE (176 aa)) constitute a BPL/LPL catalytic domain. Residues 70–77 (RGGQVTYH), 137–139 (SLG), and 150–152 (GLA) each bind substrate. Residue cysteine 168 is the Acyl-thioester intermediate of the active site.

The protein belongs to the LipB family.

The protein resides in the cytoplasm. It catalyses the reaction octanoyl-[ACP] + L-lysyl-[protein] = N(6)-octanoyl-L-lysyl-[protein] + holo-[ACP] + H(+). It functions in the pathway protein modification; protein lipoylation via endogenous pathway; protein N(6)-(lipoyl)lysine from octanoyl-[acyl-carrier-protein]: step 1/2. In terms of biological role, catalyzes the transfer of endogenously produced octanoic acid from octanoyl-acyl-carrier-protein onto the lipoyl domains of lipoate-dependent enzymes. Lipoyl-ACP can also act as a substrate although octanoyl-ACP is likely to be the physiological substrate. In Pseudomonas savastanoi pv. phaseolicola (strain 1448A / Race 6) (Pseudomonas syringae pv. phaseolicola (strain 1448A / Race 6)), this protein is Octanoyltransferase.